A 629-amino-acid polypeptide reads, in one-letter code: tRNA uridine 5-carboxymethylaminomethyl modification enzyme MnmG (629 aa).

FAD-binding positions include 13–18, V125, and S180; that span reads GGGHAG. 273-287 lines the NAD(+) pocket; sequence GPRYCPSIEDKVMRF. Q370 contributes to the FAD binding site.

It belongs to the MnmG family. Homodimer. Heterotetramer of two MnmE and two MnmG subunits. Requires FAD as cofactor.

Its subcellular location is the cytoplasm. NAD-binding protein involved in the addition of a carboxymethylaminomethyl (cmnm) group at the wobble position (U34) of certain tRNAs, forming tRNA-cmnm(5)s(2)U34. The sequence is that of tRNA uridine 5-carboxymethylaminomethyl modification enzyme MnmG from Aliivibrio fischeri (strain ATCC 700601 / ES114) (Vibrio fischeri).